The sequence spans 392 residues: 6-aminohexanoate-dimer hydrolase (392 aa).

A disordered region spans residues 1–27 (MNTPTTGSHPARYPSAAAGEPTLDSWQ). S112 is a catalytic residue.

The catalysed reaction is [N-(6-aminohexanoyl)](n) + H2O = [N-(6-aminohexanoyl)](n-1) + 6-aminohexanoate. It carries out the reaction N-(6-aminohexanoyl)-6-aminohexanoate + H2O = 2 6-aminohexanoate. It functions in the pathway xenobiotic degradation; nylon-6 oligomer degradation. Functionally, involved in nylon oligomer degradation. In Paenarthrobacter ureafaciens, this protein is 6-aminohexanoate-dimer hydrolase.